Here is a 572-residue protein sequence, read N- to C-terminus: NADP-dependent malic enzyme (572 aa).

The residue at position 1 (Met1) is an N-acetylmethionine. The Proton donor role is filled by Tyr102. Arg155 is an NADP(+) binding site. Lys173 serves as the catalytic Proton acceptor. Residues Glu245, Asp246, and Asp269 each coordinate a divalent metal cation. NADP(+)-binding positions include Asp269 and 301-318; that span reads GAGE…MAME. Ser336 is modified (phosphoserine).

This sequence belongs to the malic enzymes family. In terms of assembly, homotetramer. It depends on Mg(2+) as a cofactor. The cofactor is Mn(2+).

The protein localises to the cytoplasm. It catalyses the reaction (S)-malate + NADP(+) = pyruvate + CO2 + NADPH. The enzyme catalyses oxaloacetate + H(+) = pyruvate + CO2. Catalyzes the oxidative decarboxylation of (S)-malate in the presence of NADP(+) and divalent metal ions, and decarboxylation of oxaloacetate. This chain is NADP-dependent malic enzyme (Me1), found in Mus musculus (Mouse).